Reading from the N-terminus, the 218-residue chain is Adenylate kinase (218 aa).

Residue 12–17 (GAGKGT) coordinates ATP. Residues 32–61 (STGDIFRKNISENTPLGIEAKSYMDNGQLV) form an NMP region. AMP is bound by residues T33, R38, 59–61 (QLV), 87–90 (GFPR), and Q94. The tract at residues 128 to 165 (GRRVCPSCGASYHIKFNPPTNDGKCDLCGSDVIQRKDD) is LID. R129 serves as a coordination point for ATP. Zn(2+) is bound by residues C132 and C135. 138–139 (SY) contacts ATP. The Zn(2+) site is built by C152 and C155. AMP is bound by residues R162 and R173. Q201 contributes to the ATP binding site.

This sequence belongs to the adenylate kinase family. In terms of assembly, monomer.

The protein resides in the cytoplasm. The enzyme catalyses AMP + ATP = 2 ADP. Its pathway is purine metabolism; AMP biosynthesis via salvage pathway; AMP from ADP: step 1/1. Functionally, catalyzes the reversible transfer of the terminal phosphate group between ATP and AMP. Plays an important role in cellular energy homeostasis and in adenine nucleotide metabolism. This chain is Adenylate kinase, found in Clostridium perfringens (strain 13 / Type A).